Consider the following 378-residue polypeptide: 5-amino-6-(D-ribitylamino)uracil--L-tyrosine 4-hydroxyphenyl transferase (378 aa).

The Radical SAM core domain maps to 59–306 (VTYVINRNIN…TAVARIYLGN (248 aa)). [4Fe-4S] cluster contacts are provided by Cys73, Cys77, and Cys80.

Belongs to the radical SAM superfamily. CofH family. As to quaternary structure, consists of two subunits, CofG and CofH. The cofactor is [4Fe-4S] cluster.

It carries out the reaction 5-amino-6-(D-ribitylamino)uracil + L-tyrosine + S-adenosyl-L-methionine = 5-amino-5-(4-hydroxybenzyl)-6-(D-ribitylimino)-5,6-dihydrouracil + 2-iminoacetate + 5'-deoxyadenosine + L-methionine + H(+). It participates in cofactor biosynthesis; coenzyme F0 biosynthesis. In terms of biological role, catalyzes the radical-mediated synthesis of 5-amino-5-(4-hydroxybenzyl)-6-(D-ribitylimino)-5,6-dihydrouracil from 5-amino-6-(D-ribitylamino)uracil and L-tyrosine. The chain is 5-amino-6-(D-ribitylamino)uracil--L-tyrosine 4-hydroxyphenyl transferase from Microcystis aeruginosa (strain NIES-843 / IAM M-2473).